The sequence spans 67 residues: Large ribosomal subunit protein uL29 (67 aa).

It belongs to the universal ribosomal protein uL29 family.

This Methanosarcina acetivorans (strain ATCC 35395 / DSM 2834 / JCM 12185 / C2A) protein is Large ribosomal subunit protein uL29.